The sequence spans 894 residues: Protein NLP9 (894 aa).

One can recognise an RWP-RK domain in the interval 517–603 (QEISGARRLE…LDSVQGVEGG (87 aa)). Residues 578-598 (RKINKVNRSLRKIQTVLDSVQ) adopt a coiled-coil conformation. Positions 732 to 763 (NTRIERGNGTVEPNHSISSSMSDSSNSSGAVL) are disordered. Positions 747–763 (SISSSMSDSSNSSGAVL) are enriched in low complexity. Residues 792-875 (TLTVKATYRE…HTVKFLVRDI (84 aa)) enclose the PB1 domain.

Its subcellular location is the nucleus. In terms of biological role, probable transcription factor. This is Protein NLP9 (NLP9) from Arabidopsis thaliana (Mouse-ear cress).